A 248-amino-acid chain; its full sequence is NH(3)-dependent NAD(+) synthetase (248 aa).

31-38 is an ATP binding site; it reads GVSGGVDS. D37 contacts Mg(2+). A deamido-NAD(+)-binding site is contributed by R114. T134 provides a ligand contact to ATP. Residue E139 participates in Mg(2+) binding. Deamido-NAD(+)-binding residues include K147 and D154. ATP-binding residues include K163 and S185. 236–237 serves as a coordination point for deamido-NAD(+); that stretch reads HK.

The protein belongs to the NAD synthetase family. In terms of assembly, homodimer.

It catalyses the reaction deamido-NAD(+) + NH4(+) + ATP = AMP + diphosphate + NAD(+) + H(+). The protein operates within cofactor biosynthesis; NAD(+) biosynthesis; NAD(+) from deamido-NAD(+) (ammonia route): step 1/1. Its function is as follows. Catalyzes the ATP-dependent amidation of deamido-NAD to form NAD. Uses ammonia as a nitrogen source. This is NH(3)-dependent NAD(+) synthetase from Methanoregula boonei (strain DSM 21154 / JCM 14090 / 6A8).